We begin with the raw amino-acid sequence, 373 residues long: Putative F-box/kelch-repeat protein At5g24040 (373 aa).

The region spanning 2–50 (VKWSELPPEILHLISLKIDNPFDLIHFRSVCSFWRSSSLLKFRHMTSLR) is the F-box domain. 2 Kelch repeats span residues 165-207 (NEYM…PFKG) and 262-308 (YDFH…CTFS).

This is Putative F-box/kelch-repeat protein At5g24040 from Arabidopsis thaliana (Mouse-ear cress).